Reading from the N-terminus, the 166-residue chain is Signal peptidase complex catalytic subunit SEC11 (166 aa).

Residues Met1–Gln9 lie on the Cytoplasmic side of the membrane. Residues Leu10–Ala31 form a helical; Signal-anchor for type II membrane protein membrane-spanning segment. Residues Asn32–Glu166 are Lumenal-facing. Active-site charge relay system residues include Ser44, His83, and Asp108. Residues Ala152–Leu163 form a C-terminal short (CTS) helix region.

The protein belongs to the peptidase S26B family. As to quaternary structure, component of the signal peptidase complex (SPC) composed of a catalytic subunit SEC11 and three accessory subunits SPC1, SPC2 and SPC3. The complex induces a local thinning of the ER membrane which is used to measure the length of the signal peptide (SP) h-region of protein substrates. This ensures the selectivity of the complex towards h-regions shorter than 18-20 amino acids. SPC associates with the translocon complex.

The protein localises to the endoplasmic reticulum membrane. The enzyme catalyses Cleavage of hydrophobic, N-terminal signal or leader sequences from secreted and periplasmic proteins.. In terms of biological role, catalytic component of the signal peptidase complex (SPC) which catalyzes the cleavage of N-terminal signal sequences from nascent proteins as they are translocated into the lumen of the endoplasmic reticulum. Specifically cleaves N-terminal signal peptides that contain a hydrophobic alpha-helix (h-region) shorter than 18-20 amino acids. In Clavispora lusitaniae (strain ATCC 42720) (Yeast), this protein is Signal peptidase complex catalytic subunit SEC11 (SEC11).